The primary structure comprises 511 residues: Maturase K (511 aa).

This sequence belongs to the intron maturase 2 family. MatK subfamily.

It localises to the plastid. The protein resides in the chloroplast. Its function is as follows. Usually encoded in the trnK tRNA gene intron. Probably assists in splicing its own and other chloroplast group II introns. This is Maturase K from Paulownia tomentosa (Princess tree).